Consider the following 328-residue polypeptide: tRNA(Ile)-lysidine synthase (328 aa).

Residue 35–40 (SGGADS) participates in ATP binding.

This sequence belongs to the tRNA(Ile)-lysidine synthase family.

The protein resides in the cytoplasm. The enzyme catalyses cytidine(34) in tRNA(Ile2) + L-lysine + ATP = lysidine(34) in tRNA(Ile2) + AMP + diphosphate + H(+). Ligates lysine onto the cytidine present at position 34 of the AUA codon-specific tRNA(Ile) that contains the anticodon CAU, in an ATP-dependent manner. Cytidine is converted to lysidine, thus changing the amino acid specificity of the tRNA from methionine to isoleucine. The polypeptide is tRNA(Ile)-lysidine synthase (Polaromonas naphthalenivorans (strain CJ2)).